The chain runs to 94 residues: Co-chaperonin GroES (94 aa).

This sequence belongs to the GroES chaperonin family. As to quaternary structure, heptamer of 7 subunits arranged in a ring. Interacts with the chaperonin GroEL.

The protein resides in the cytoplasm. Its function is as follows. Together with the chaperonin GroEL, plays an essential role in assisting protein folding. The GroEL-GroES system forms a nano-cage that allows encapsulation of the non-native substrate proteins and provides a physical environment optimized to promote and accelerate protein folding. GroES binds to the apical surface of the GroEL ring, thereby capping the opening of the GroEL channel. The polypeptide is Co-chaperonin GroES (Ehrlichia chaffeensis).